Consider the following 141-residue polypeptide: Nucleoside diphosphate kinase (141 aa).

K11, F59, R87, T93, R104, and N114 together coordinate ATP. Catalysis depends on H117, which acts as the Pros-phosphohistidine intermediate.

Belongs to the NDK family. In terms of assembly, homotetramer. It depends on Mg(2+) as a cofactor.

It is found in the cytoplasm. It catalyses the reaction a 2'-deoxyribonucleoside 5'-diphosphate + ATP = a 2'-deoxyribonucleoside 5'-triphosphate + ADP. It carries out the reaction a ribonucleoside 5'-diphosphate + ATP = a ribonucleoside 5'-triphosphate + ADP. Its function is as follows. Major role in the synthesis of nucleoside triphosphates other than ATP. The ATP gamma phosphate is transferred to the NDP beta phosphate via a ping-pong mechanism, using a phosphorylated active-site intermediate. This is Nucleoside diphosphate kinase from Legionella pneumophila subsp. pneumophila (strain Philadelphia 1 / ATCC 33152 / DSM 7513).